The sequence spans 956 residues: Bifunctional glutamine synthetase adenylyltransferase/adenylyl-removing enzyme (956 aa).

Positions 1–441 are adenylyl removase; that stretch reads MLPLSTPLLA…IFTQLIGDDS (441 aa). The interval 450-956 is adenylyl transferase; it reads HVPFKSLWLE…RRSWQQWLGE (507 aa).

The protein belongs to the GlnE family. Mg(2+) is required as a cofactor.

The enzyme catalyses [glutamine synthetase]-O(4)-(5'-adenylyl)-L-tyrosine + phosphate = [glutamine synthetase]-L-tyrosine + ADP. It catalyses the reaction [glutamine synthetase]-L-tyrosine + ATP = [glutamine synthetase]-O(4)-(5'-adenylyl)-L-tyrosine + diphosphate. Its function is as follows. Involved in the regulation of glutamine synthetase GlnA, a key enzyme in the process to assimilate ammonia. When cellular nitrogen levels are high, the C-terminal adenylyl transferase (AT) inactivates GlnA by covalent transfer of an adenylyl group from ATP to specific tyrosine residue of GlnA, thus reducing its activity. Conversely, when nitrogen levels are low, the N-terminal adenylyl removase (AR) activates GlnA by removing the adenylyl group by phosphorolysis, increasing its activity. The regulatory region of GlnE binds the signal transduction protein PII (GlnB) which indicates the nitrogen status of the cell. This chain is Bifunctional glutamine synthetase adenylyltransferase/adenylyl-removing enzyme, found in Photorhabdus laumondii subsp. laumondii (strain DSM 15139 / CIP 105565 / TT01) (Photorhabdus luminescens subsp. laumondii).